Consider the following 491-residue polypeptide: Chromosomal replication initiator protein DnaA (491 aa).

The domain I, interacts with DnaA modulators stretch occupies residues 1–69 (MTTWNKCLKK…TIQEFHDGDL (69 aa)). Positions 69-154 (LLIEYSNKKF…KDDQEYSFGL (86 aa)) are domain II. Residues 106-126 (DSEETSLNQEPKKSQKKLSSK) are disordered. The interval 155-371 (PLKEKYVFDS…GALNRVLTTS (217 aa)) is domain III, AAA+ region. ATP-binding residues include Gly199, Gly201, Lys202, and Thr203. Positions 372-491 (KFNHKDPTIE…YELLLDKISR (120 aa)) are domain IV, binds dsDNA.

This sequence belongs to the DnaA family. As to quaternary structure, oligomerizes as a right-handed, spiral filament on DNA at oriC.

It localises to the cytoplasm. Its function is as follows. Plays an essential role in the initiation and regulation of chromosomal replication. ATP-DnaA binds to the origin of replication (oriC) to initiate formation of the DNA replication initiation complex once per cell cycle. Binds the DnaA box (a 9 base pair repeat at the origin) and separates the double-stranded (ds)DNA. Forms a right-handed helical filament on oriC DNA; dsDNA binds to the exterior of the filament while single-stranded (ss)DNA is stabiized in the filament's interior. The ATP-DnaA-oriC complex binds and stabilizes one strand of the AT-rich DNA unwinding element (DUE), permitting loading of DNA polymerase. After initiation quickly degrades to an ADP-DnaA complex that is not apt for DNA replication. Binds acidic phospholipids. This is Chromosomal replication initiator protein DnaA from Francisella philomiragia subsp. philomiragia (strain ATCC 25017 / CCUG 19701 / FSC 153 / O#319-036).